A 527-amino-acid polypeptide reads, in one-letter code: Phosphoethanolamine transferase OpgE (527 aa).

Over 1–33 (MNLTLKESLVTRSRVFSPWTAFYFLQSLLINLG) the chain is Periplasmic. Residues 34–54 (LGYPFSLLYTAAFTAILLLLW) form a helical membrane-spanning segment. The Cytoplasmic segment spans residues 55–62 (RTLPRVQK). A helical membrane pass occupies residues 63–83 (VLVGVSSLVAACYFPFAQAYG). Residues 84–106 (APNFNTLLALHSTNMEESTEILT) are Periplasmic-facing. A helical transmembrane segment spans residues 107 to 127 (IFPWYSYLVGLFIFALGVIAI). Residues 128–146 (RRKKENEKARWNTFDSLCL) lie on the Cytoplasmic side of the membrane. Residues 147-167 (VFSVATFFVAPVQNLAWGGVF) traverse the membrane as a helical segment. The Periplasmic segment spans residues 168–527 (KLKDTGYPVF…LGTDIFDPKP (360 aa)).

This sequence belongs to the phosphoethanolamine transferase family.

Its subcellular location is the cell inner membrane. Its pathway is glycan metabolism; osmoregulated periplasmic glucan (OPG) biosynthesis. In terms of biological role, catalyzes the addition of a phosphoethanolamine moiety to the osmoregulated periplasmic glucan (OPG) backbone. This Escherichia coli (strain K12) protein is Phosphoethanolamine transferase OpgE (opgE).